The chain runs to 180 residues: Adenine phosphoribosyltransferase (180 aa).

The protein belongs to the purine/pyrimidine phosphoribosyltransferase family. Homodimer.

It localises to the cytoplasm. The enzyme catalyses AMP + diphosphate = 5-phospho-alpha-D-ribose 1-diphosphate + adenine. It participates in purine metabolism; AMP biosynthesis via salvage pathway; AMP from adenine: step 1/1. Catalyzes a salvage reaction resulting in the formation of AMP, that is energically less costly than de novo synthesis. This is Adenine phosphoribosyltransferase from Sinorhizobium medicae (strain WSM419) (Ensifer medicae).